The primary structure comprises 293 residues: Zinc metalloproteinase nas-2 (293 aa).

The N-terminal stretch at 1–17 is a signal peptide; it reads MIFPLLLTLILPNFVAP. The propeptide occupies 18 to 67; sequence KVLEPEKDDEIAVSTQREKTFFDMKLILTKLPTFEPSKYGHINIPLRKKR. In terms of domain architecture, Peptidase M12A spans 67–260; that stretch reads RGIALHPLQW…ININTFYKCK (194 aa). The N-linked (GlcNAc...) asparagine glycan is linked to Asn-111. 2 cysteine pairs are disulfide-bonded: Cys-114/Cys-259 and Cys-139/Cys-169. His-180 is a Zn(2+) binding site. The active site involves Glu-181. Zn(2+) contacts are provided by His-184 and His-190. An N-linked (GlcNAc...) asparagine glycan is attached at Asn-287.

The cofactor is Zn(2+).

It localises to the secreted. Its function is as follows. Metalloprotease. The sequence is that of Zinc metalloproteinase nas-2 (nas-2) from Caenorhabditis elegans.